The chain runs to 412 residues: Stachydrine N-demethylase (412 aa).

The Rieske domain occupies Leu45–Ile150. 4 residues coordinate [2Fe-2S] cluster: Cys86, His88, Cys106, and His109. Fe cation is bound by residues His204, His209, and Asp360.

The protein belongs to the bacterial ring-hydroxylating dioxygenase alpha subunit family. Homotrimer. The system is probably composed of an oxygenase subunit (Stc2) and two reductase subunits (Stc3 and Stc4). [2Fe-2S] cluster serves as cofactor. It depends on Fe cation as a cofactor.

It carries out the reaction L-proline betaine + NADH + O2 + H(+) = N-methyl-L-proline + formaldehyde + NAD(+) + H2O. The catalysed reaction is L-proline betaine + NADPH + O2 + H(+) = N-methyl-L-proline + formaldehyde + NADP(+) + H2O. In terms of biological role, monooxygenase involved in the catabolism of stachydrine (L-proline betaine), a source of carbon and nitrogen. Part of a Rieske-type oxygenase system that catalyzes the demethylation of stachydrine to produce N-methyl-L-proline (monomethylproline). Stc2 is the catalytic subunit. This chain is Stachydrine N-demethylase, found in Rhizobium meliloti (strain 1021) (Ensifer meliloti).